The chain runs to 118 residues: MRNNKTPFLSAIFTASIRGYQRFFSAFTPSSCRFYPTCSNYALWLLCFENPLSAMGKIAIRILSCNPFCSGGIAYPTTRLKRPSLLQSHKDFNRNFKTITFWLVPTTKSRTTYYIIKV.

Belongs to the UPF0161 family.

The protein localises to the cell inner membrane. Functionally, could be involved in insertion of integral membrane proteins into the membrane. The chain is Putative membrane protein insertion efficiency factor from Helicobacter pylori (strain HPAG1).